Consider the following 308-residue polypeptide: Glutamyl-Q tRNA(Asp) synthetase (308 aa).

L-glutamate-binding positions include 19-23 (RFAPS) and Glu-55. The 'HIGH' region motif lies at 22-32 (PSPSGELHFGS). Positions 111, 113, 125, and 129 each coordinate Zn(2+). L-glutamate contacts are provided by Tyr-182 and Arg-200. The 'KMSKS' region signature appears at 238–242 (KLSKQ). Lys-241 contacts ATP.

The protein belongs to the class-I aminoacyl-tRNA synthetase family. GluQ subfamily. Zn(2+) serves as cofactor.

Catalyzes the tRNA-independent activation of glutamate in presence of ATP and the subsequent transfer of glutamate onto a tRNA(Asp). Glutamate is transferred on the 2-amino-5-(4,5-dihydroxy-2-cyclopenten-1-yl) moiety of the queuosine in the wobble position of the QUC anticodon. The sequence is that of Glutamyl-Q tRNA(Asp) synthetase from Escherichia coli O6:H1 (strain CFT073 / ATCC 700928 / UPEC).